We begin with the raw amino-acid sequence, 190 residues long: UPF0340 protein BCE33L5016 (190 aa).

Belongs to the UPF0340 family.

This Bacillus cereus (strain ZK / E33L) protein is UPF0340 protein BCE33L5016.